A 260-amino-acid chain; its full sequence is DNA repair protein RecO (260 aa).

This sequence belongs to the RecO family.

In terms of biological role, involved in DNA repair and RecF pathway recombination. This is DNA repair protein RecO from Salinibacter ruber (strain DSM 13855 / M31).